The sequence spans 311 residues: Methionyl-tRNA formyltransferase (311 aa).

109–112 lines the (6S)-5,6,7,8-tetrahydrofolate pocket; that stretch reads SLLP.

The protein belongs to the Fmt family.

It carries out the reaction L-methionyl-tRNA(fMet) + (6R)-10-formyltetrahydrofolate = N-formyl-L-methionyl-tRNA(fMet) + (6S)-5,6,7,8-tetrahydrofolate + H(+). Its function is as follows. Attaches a formyl group to the free amino group of methionyl-tRNA(fMet). The formyl group appears to play a dual role in the initiator identity of N-formylmethionyl-tRNA by promoting its recognition by IF2 and preventing the misappropriation of this tRNA by the elongation apparatus. In Staphylococcus aureus (strain JH1), this protein is Methionyl-tRNA formyltransferase.